A 606-amino-acid chain; its full sequence is Fructan 6-exohydrolase (606 aa).

Residues 1–21 (MAPNNGSWLVLSISMMLLSHG) form the signal peptide. The N-linked (GlcNAc...) asparagine glycan is linked to N5. D70 is a catalytic residue. N110, N164, N193, N237, and N346 each carry an N-linked (GlcNAc...) asparagine glycan. Residues C445 and C491 are joined by a disulfide bond. N-linked (GlcNAc...) asparagine glycans are attached at residues N564, N585, N590, and N593.

It belongs to the glycosyl hydrolase 32 family.

It carries out the reaction Hydrolysis of terminal, non-reducing (2-&gt;6)-linked beta-D-fructofuranose residues in fructans.. With respect to regulation, not inhibited by sucrose. Hydrolyzes levan-type beta-(2-&gt;6)-linked fructans to fructose, but not inulin-type beta-(2-&gt;1)-linked fructans. The chain is Fructan 6-exohydrolase from Beta vulgaris (Sugar beet).